We begin with the raw amino-acid sequence, 380 residues long: M-protease (380 aa).

Residues 1-27 (MKKPLGKIVASTALLISVAFSSSIASA) form the signal peptide. Positions 28 to 111 (AEEAKEKYLI…IEEDAEVTTM (84 aa)) are excised as a propeptide. One can recognise an Inhibitor I9 domain in the interval 34 to 111 (KYLIGFNEQE…IEEDAEVTTM (78 aa)). Position 113 (Gln113) interacts with Ca(2+). In terms of domain architecture, Peptidase S8 spans 116–379 (PWGISRVQAP…SGLVNAEAAT (264 aa)). Asp143 functions as the Charge relay system in the catalytic mechanism. Asp151 is a Ca(2+) binding site. The active-site Charge relay system is His173. Residues Leu184, Asn186, Ile188, Val190, Ala274, Tyr276, Ala279, and Asp302 each contribute to the Ca(2+) site. Residue Ser326 is the Charge relay system of the active site.

This sequence belongs to the peptidase S8 family. As to quaternary structure, monomer. Requires Ca(2+) as cofactor.

It localises to the secreted. Its activity is regulated as follows. Activity is inhibited by phenylmethylsulfonyl fluoride and chymostatin. Alkaline serine protease that cleaves various substrates, including N-succinyl-Ala-Ala-Pro-Phe-pNA, N-succinyl-Ala-Ala-Pro-MetpNA, oxidized insulin B chain, casein, hemoglobin and scleroproteins, such as keratin, alpha-keratin and elastin. In Shouchella clausii (strain KSM-K16) (Alkalihalobacillus clausii), this protein is M-protease (aprE).